We begin with the raw amino-acid sequence, 154 residues long: Myoglobin (154 aa).

In terms of domain architecture, Globin spans 2 to 148 (GLSDAEWQLV…FRNDIAAQYK (147 aa)). Ser-4 is subject to Phosphoserine. Residue His-65 participates in nitrite binding. Residue His-65 participates in O2 binding. Thr-68 is modified (phosphothreonine). A heme b-binding site is contributed by His-94.

Belongs to the globin family. In terms of assembly, monomeric.

It localises to the cytoplasm. It is found in the sarcoplasm. The enzyme catalyses Fe(III)-heme b-[protein] + nitric oxide + H2O = Fe(II)-heme b-[protein] + nitrite + 2 H(+). It catalyses the reaction H2O2 + AH2 = A + 2 H2O. Functionally, monomeric heme protein which primary function is to store oxygen and facilitate its diffusion within muscle tissues. Reversibly binds oxygen through a pentacoordinated heme iron and enables its timely and efficient release as needed during periods of heightened demand. Depending on the oxidative conditions of tissues and cells, and in addition to its ability to bind oxygen, it also has a nitrite reductase activity whereby it regulates the production of bioactive nitric oxide. Under stress conditions, like hypoxia and anoxia, it also protects cells against reactive oxygen species thanks to its pseudoperoxidase activity. The sequence is that of Myoglobin (MB) from Oryctolagus cuniculus (Rabbit).